An 876-amino-acid chain; its full sequence is Alanine--tRNA ligase (876 aa).

Lysine 74 bears the N6-acetyllysine mark. Residues histidine 564, histidine 568, cysteine 666, and histidine 670 each contribute to the Zn(2+) site.

Belongs to the class-II aminoacyl-tRNA synthetase family. In terms of assembly, homotetramer. Zn(2+) is required as a cofactor.

It localises to the cytoplasm. It catalyses the reaction tRNA(Ala) + L-alanine + ATP = L-alanyl-tRNA(Ala) + AMP + diphosphate. In terms of biological role, catalyzes the attachment of alanine to tRNA(Ala) in a two-step reaction: alanine is first activated by ATP to form Ala-AMP and then transferred to the acceptor end of tRNA(Ala). Also edits incorrectly charged Ser-tRNA(Ala) and Gly-tRNA(Ala) via its editing domain. The protein is Alanine--tRNA ligase of Escherichia coli (strain ATCC 8739 / DSM 1576 / NBRC 3972 / NCIMB 8545 / WDCM 00012 / Crooks).